A 136-amino-acid polypeptide reads, in one-letter code: Succinate dehydrogenase 2 membrane subunit SdhC (136 aa).

3 helical membrane-spanning segments follow: residues 32–52, 70–90, and 109–129; these read RISGATIFFFLFVHVLDAAML, IVGLMEYGLVAAVLFHALNGI, and LWIIGSVFLLLMVPAGVVVGI. H85 is a heme binding site.

It belongs to the cytochrome b560 family. Part of an enzyme complex containing four subunits: a flavoprotein (SdhA), an iron-sulfur protein (SdhB), plus two membrane-anchoring proteins (SdhC and SdhD). It depends on heme as a cofactor.

The protein localises to the cell membrane. In terms of biological role, membrane-anchoring subunit of succinate dehydrogenase 2 (Sdh2). Sdh2 may catalyze the two-electron oxidation of succinate to fumarate with a corresponding reduction of quinone to quinol under low oxygen conditions, when the primary aerobic succinate dehydrogenase (Sdh1) is inhibited. Sdh2 seems to be the generator of the proton motive force (PMF) under hypoxia. The polypeptide is Succinate dehydrogenase 2 membrane subunit SdhC (Mycobacterium tuberculosis (strain ATCC 25618 / H37Rv)).